A 310-amino-acid chain; its full sequence is Zinc-finger homeodomain protein 3 (310 aa).

The tract at residues 1-64 is disordered; sequence MEIASQEDPI…GLGKNHDHSH (64 aa). Residues 39 to 56 are compositionally biased toward polar residues; the sequence is LNITTSNPLLVSSNSNGL. A ZF-HD dimerization-type; degenerate zinc finger spans residues 87-136; that stretch reads YKECLKNHAATMGGNAIDGCGEFMPSGEEGSIEALTCSVCNCHRNFHRRE. Disordered stretches follow at residues 184 to 220 and 281 to 310; these read TAGS…YGHN and LSKK…STNP. The segment covering 190-199 has biased composition (acidic residues); sequence ESEDLMEEEG. Positions 222–285 form a DNA-binding region, homeobox; that stretch reads KKRFRTKFTQ…NNKQNLSKKS (64 aa). Over residues 281–291 the composition is skewed to low complexity; it reads LSKKSNNVSNN. Polar residues predominate over residues 292 to 310; that stretch reads VDLSAGNNDITENLASTNP.

Homo- and heterodimer with other ZFHD proteins. Interacts with MIF2 and MIF3; these interactions prevent nuclear localization and DNA-binding to inhibit transcription regulation activity. Binds to ZHD1, ZHD2 and ZHD11. Interacts with HIPP30. Interacts with KIN10, KIN11 and FLZ8. Mostly expressed in flowers and inflorescence.

The protein resides in the nucleus. Functionally, putative transcription factor. The chain is Zinc-finger homeodomain protein 3 (ZHD3) from Arabidopsis thaliana (Mouse-ear cress).